Here is a 348-residue protein sequence, read N- to C-terminus: Ninja-family protein AFP2 (348 aa).

The segment at 186–272 is disordered; the sequence is DSDGGGATGG…VDRKGKGMAT (87 aa). A compositionally biased stretch (gly residues) spans 187–197; it reads SDGGGATGGGS. Composition is skewed to polar residues over residues 207-216 and 228-244; these read KNQQGSSNSC and CSSN…SVTR. A compositionally biased stretch (basic and acidic residues) spans 247 to 267; the sequence is KVNENENEKRVRSEDSVDRKG.

It belongs to the Ninja family. As to quaternary structure, forms a homodimer and heterodimer with AFP1 and AFP3. Interacts with ABI5/DPBF1, DPBF2, AREB3/DPBF3, EEL/DPBF4, ABF1, ABF3/DPBF5 and ABF4/AREB2.

It is found in the nucleus. Functionally, acts as a negative regulator of abscisic acid (ABA) response during germination through the ubiquitin-mediated proteolysis of ABI5/DPBF1. In Arabidopsis thaliana (Mouse-ear cress), this protein is Ninja-family protein AFP2 (AFP2).